The following is a 431-amino-acid chain: Neuronal pentraxin-2 (431 aa).

Residues 1-15 (MLALLAASVALAVAA) form the signal peptide. N-linked (GlcNAc...) asparagine glycosylation is found at asparagine 148 and asparagine 189. Residues 223-424 (DAFKVSLPLR…GASKWPVETC (202 aa)) form the Pentraxin (PTX) domain. A disulfide bridge connects residues cysteine 253 and cysteine 313. The Ca(2+) site is built by asparagine 277, glutamate 355, glutamine 356, aspartate 357, and glutamine 367. The N-linked (GlcNAc...) asparagine glycan is linked to asparagine 393.

In terms of assembly, homooligomer or heterooligomer (probably pentamer) with neuronal pentraxin receptor (NPTXR). Ca(2+) serves as cofactor. Brain, pancreas, liver, heart and skeletal muscle. Highest levels are seen in the testis.

Its subcellular location is the secreted. Its function is as follows. Likely to play role in the modification of cellular properties that underlie long-term plasticity. Binds to agar matrix in a calcium-dependent manner. In Homo sapiens (Human), this protein is Neuronal pentraxin-2 (NPTX2).